A 201-amino-acid chain; its full sequence is Pyridoxine/pyridoxamine 5'-phosphate oxidase (201 aa).

FMN contacts are provided by residues 49–54 (RMVLLK), 64–65 (YT), Lys-71, and Gln-93. Lys-54 lines the substrate pocket. The substrate site is built by Tyr-111, Arg-115, and Ser-119. FMN is bound by residues 128–129 (QS) and Trp-172. 178–180 (RLH) contacts substrate. Arg-182 is a binding site for FMN.

Belongs to the pyridoxamine 5'-phosphate oxidase family. In terms of assembly, homodimer. Requires FMN as cofactor.

The enzyme catalyses pyridoxamine 5'-phosphate + O2 + H2O = pyridoxal 5'-phosphate + H2O2 + NH4(+). It carries out the reaction pyridoxine 5'-phosphate + O2 = pyridoxal 5'-phosphate + H2O2. It functions in the pathway cofactor metabolism; pyridoxal 5'-phosphate salvage; pyridoxal 5'-phosphate from pyridoxamine 5'-phosphate: step 1/1. Its pathway is cofactor metabolism; pyridoxal 5'-phosphate salvage; pyridoxal 5'-phosphate from pyridoxine 5'-phosphate: step 1/1. Catalyzes the oxidation of either pyridoxine 5'-phosphate (PNP) or pyridoxamine 5'-phosphate (PMP) into pyridoxal 5'-phosphate (PLP). This is Pyridoxine/pyridoxamine 5'-phosphate oxidase from Ruegeria sp. (strain TM1040) (Silicibacter sp.).